The following is a 211-amino-acid chain: uncharacterized protein (211 aa).

The tract at residues Leu-187–Asp-211 is disordered. Over residues Glu-201–Asp-211 the composition is skewed to basic and acidic residues.

This is an uncharacterized protein from Spiroplasma citri.